A 64-amino-acid chain; its full sequence is Large ribosomal subunit protein bL35 (64 aa).

Residues 18–39 (GSGLVKHYPSNKHHKNTHKKEN) are disordered. Residues 26–39 (PSNKHHKNTHKKEN) show a composition bias toward basic residues.

It belongs to the bacterial ribosomal protein bL35 family.

The polypeptide is Large ribosomal subunit protein bL35 (Symbiobacterium thermophilum (strain DSM 24528 / JCM 14929 / IAM 14863 / T)).